The chain runs to 224 residues: Prothoracicotropic hormone (224 aa).

Residues 1 to 29 (MITRPIILVILCYAILMIVQSFVPKAVAL) form the signal peptide. Intrachain disulfides connect Cys132–Cys169, Cys155–Cys211, and Cys163–Cys213. N-linked (GlcNAc...) asparagine glycosylation occurs at Asn156.

In terms of assembly, homodimer; disulfide-linked. In terms of tissue distribution, PTTH is synthesized by two dorsolateral neurosecretory cells of the Bombyx brain.

In terms of biological role, PTTH is a brain secretory polypeptide of insects which stimulates the prothoracic glands to produce and release ecdysone, the steroid essential to insect development. Functionally, peptides P2K and P6K are presumed to be cleaved post-translationally and may play some unknown physiologically or developmentally important functions. The chain is Prothoracicotropic hormone from Bombyx mori (Silk moth).